Reading from the N-terminus, the 637-residue chain is Neuroendocrine convertase 2 (637 aa).

The N-terminal stretch at 1–24 is a signal peptide; it reads MEGGCGSQWKAAGLLFCVMVFASA. The propeptide occupies 25-108; the sequence is ERPVFTNHFL…QQEGFDRKKR (84 aa). The Peptidase S8 domain occupies 128–452; sequence QWYLFNTGQA…YGVLDAGAMV (325 aa). Catalysis depends on charge relay system residues D166 and H207. 2 disulfides stabilise this stretch: C224–C375 and C316–C346. N374 carries an N-linked (GlcNAc...) asparagine glycan. Residue S383 is the Charge relay system of the active site. The 137-residue stretch at 460–596 folds into the P/Homo B domain; that stretch reads TVPERFHCVG…TLMLHGTQSA (137 aa). A disulfide bridge links C467 with C493. N-linked (GlcNAc...) asparagine glycans are attached at residues N513 and N523.

This sequence belongs to the peptidase S8 family. Furin subfamily.

It localises to the cytoplasmic vesicle. It is found in the secretory vesicle. The protein localises to the secreted. The enzyme catalyses Release of protein hormones and neuropeptides from their precursors, generally by hydrolysis of -Lys-Arg-|- bonds.. Its function is as follows. Serine endopeptidase which is involved in the processing of hormone and other protein precursors at sites comprised of pairs of basic amino acid residues. Responsible for the release of glucagon from proglucagon in pancreatic A cells. The chain is Neuroendocrine convertase 2 (Pcsk2) from Rattus norvegicus (Rat).